A 263-amino-acid polypeptide reads, in one-letter code: Cell division protein DivIB (263 aa).

Topologically, residues 1-32 are cytoplasmic; the sequence is MNPGQDREKIVNIEERIPKIKEQRKQKANRRL. Residues 33–53 traverse the membrane as a helical segment; it reads ISFIMLFFIMVLIIVYLQTPI. An alpha region spans residues 51–123; sequence TPISKVSTIS…NKINIAIEEY (73 aa). Residues 54–123 enclose the POTRA domain; that stretch reads SKVSTISVTG…NKINIAIEEY (70 aa). Residues 54–263 lie on the Extracellular side of the membrane; it reads SKVSTISVTG…DKAAKKEDEN (210 aa). The interval 124–251 is beta; the sequence is KAIAYLEKDD…EVATYFEEFG (128 aa). A gamma region spans residues 229–263; the sequence is SQLSSNKKGIIHLEVATYFEEFGKNDKAAKKEDEN.

Belongs to the FtsQ/DivIB family. DivIB subfamily. As to quaternary structure, interacts with FtsL, DivIC and PBP-2B.

It is found in the cell membrane. Functionally, cell division protein that may be involved in stabilizing or promoting the assembly of the division complex. Plays an essential role in division at high temperatures, maybe by protecting FtsL from degradation or by promoting formation of the FtsL-DivIC complex. May modulate the transpeptidase activity of PBP-2B. Also required for efficient sporulation at all temperatures. Could be directly involved in the engulfment process or be required to form a sporulation septum competent for engulfment. Influences the Spo0J/Soj system of chromosome segregation. The protein is Cell division protein DivIB of Bacillus subtilis (strain 168).